A 707-amino-acid chain; its full sequence is Polyribonucleotide nucleotidyltransferase (707 aa).

Residues D485 and D491 each contribute to the Mg(2+) site. Residues 552–611 form the KH domain; that stretch reads PRIYTMKIDPKKIKDVIGKGGATIRTLTEETGTSIDIDDDGTVKIAAIDGNAVKEVMARI. An S1 motif domain is found at 621–689; the sequence is GAVYTGKVTR…RQGRIRLTMK (69 aa).

The protein belongs to the polyribonucleotide nucleotidyltransferase family. As to quaternary structure, component of the RNA degradosome, which is a multiprotein complex involved in RNA processing and mRNA degradation. Requires Mg(2+) as cofactor.

It localises to the cytoplasm. The enzyme catalyses RNA(n+1) + phosphate = RNA(n) + a ribonucleoside 5'-diphosphate. Its function is as follows. Involved in mRNA degradation. Catalyzes the phosphorolysis of single-stranded polyribonucleotides processively in the 3'- to 5'-direction. The chain is Polyribonucleotide nucleotidyltransferase from Actinobacillus succinogenes (strain ATCC 55618 / DSM 22257 / CCUG 43843 / 130Z).